The chain runs to 492 residues: Ketol-acid reductoisomerase (NADP(+)) (492 aa).

The KARI N-terminal Rossmann domain occupies 15-208 (AQLGKCRFMA…GAHRAGVLES (194 aa)). NADP(+) is bound by residues 45–48 (CGAQ), Arg68, Arg76, Ser78, and 108–110 (DKQ). Residue His132 is part of the active site. NADP(+) is bound at residue Gly158. 2 KARI C-terminal knotted domains span residues 209–344 (SFVA…NSPE) and 345–485 (YDGK…MTDM). Mg(2+)-binding residues include Asp217, Glu221, Glu389, and Glu393. Ser414 serves as a coordination point for substrate.

It belongs to the ketol-acid reductoisomerase family. Mg(2+) is required as a cofactor.

It carries out the reaction (2R)-2,3-dihydroxy-3-methylbutanoate + NADP(+) = (2S)-2-acetolactate + NADPH + H(+). The catalysed reaction is (2R,3R)-2,3-dihydroxy-3-methylpentanoate + NADP(+) = (S)-2-ethyl-2-hydroxy-3-oxobutanoate + NADPH + H(+). It functions in the pathway amino-acid biosynthesis; L-isoleucine biosynthesis; L-isoleucine from 2-oxobutanoate: step 2/4. The protein operates within amino-acid biosynthesis; L-valine biosynthesis; L-valine from pyruvate: step 2/4. In terms of biological role, involved in the biosynthesis of branched-chain amino acids (BCAA). Catalyzes an alkyl-migration followed by a ketol-acid reduction of (S)-2-acetolactate (S2AL) to yield (R)-2,3-dihydroxy-isovalerate. In the isomerase reaction, S2AL is rearranged via a Mg-dependent methyl migration to produce 3-hydroxy-3-methyl-2-ketobutyrate (HMKB). In the reductase reaction, this 2-ketoacid undergoes a metal-dependent reduction by NADPH to yield (R)-2,3-dihydroxy-isovalerate. This chain is Ketol-acid reductoisomerase (NADP(+)), found in Photorhabdus laumondii subsp. laumondii (strain DSM 15139 / CIP 105565 / TT01) (Photorhabdus luminescens subsp. laumondii).